Reading from the N-terminus, the 527-residue chain is Protein PLASTID TRANSCRIPTIONALLY ACTIVE 12, chloroplastic (527 aa).

Residues 1 to 30 (MASISTTTWLYRGQVCTDSGKSSNCIVQRR) constitute a chloroplast transit peptide. The tract at residues 1–115 (MASISTTTWL…ASIPGEDYWP (115 aa)) is PHYA-interacting region 1 (PIR1). Residues 89–188 (SYMDSTSGKL…NDSSDGFVTY (100 aa)) are disordered. Acidic residues predominate over residues 163–181 (TNDEVSDSEDSSEEEENDS). Short sequence motifs (nuclear localization signal) lie at residues 204 to 211 (DKKLGRPH) and 235 to 242 (WRKPEKEQ). Residues 252 to 352 (DVETVFLKAM…EMFSHQTDRE (101 aa)) are PHYA-interacting region 2 (PIR2). A compositionally biased stretch (acidic residues) spans 458 to 471 (GENDDDEDDADVEK). A disordered region spans residues 458–527 (GENDDDEDDA…LMDFEEETDP (70 aa)). The span at 485–504 (ETPELRTAKPKPKKEGRMSL) shows a compositional bias: basic and acidic residues. The segment covering 506–527 (EAVDDAENLTDFLMDFEEETDP) has biased composition (acidic residues). Positions 512–520 (ENLTDFLMD) match the Required and sufficient for transcriptional transactivation activity and to trigger PIF proteins degradation motif.

Component of the transcriptionally active chromosome (TAC) complexes. Interacts with PTAC14 and PTAC7. Binds directly to PTAC6/PAP8 in the nucleus. Interacts with MED14. Binds to SL1/MTERF3. Binds to photoactivated phytochromes (e.g. PHYA and PHYB) via their photosensory domains; these interactions stimulate its light-mediated accumulation. Associates, via its N-terminal region, with phytochrome-interacting factors (PIFs) including PIF1, PIF3, PIF4, PIF5, PIF6, BHLH72/PIF7, UNE10/PIF8 and PIL1. Binds to RAD4. Associates with MRL7/RCB. As to expression, mostly expressed in cotyledons, leaves, stems and flowers, but barely in roots.

It localises to the plastid. Its subcellular location is the chloroplast. The protein resides in the nucleus. Its function is as follows. Involved in plastid gene expression. Acidic transcriptional coactivator necessary for the transactivation of many PIFs target genes (class B genes), particularly during the regulation of hypocotyl growth. Plays dual opposite roles in regulating hypocotyl growth, preventing it in red and far-red conditions, but promoting it otherwise. Required in the nucleus for the initiation of photomorphogenesis mediated by phytochromes (PHYs) (e.g. PHYA and PHYB) by mediating PHYs localization to photobodies, especially in response to red and far-red light, and implicating phytochrome nuclear bodies as sites of proteolysis for PHYs and PIFs proteins (e.g. PIF1 and PIF3). Acts downstream of PHYs and upstream of DET1. Involved in UV tolerance in both roots and hypocotyls, specifically in dark conditions. Element of a PIF4/HMR/MED14-dependent thermoresponsive process; acts as a PIF4 transcriptional coactivator to trigger the thermoresponsive growth-relevant genes (e.g. mainly involved in biosynthesis and signaling of the phytohormone auxin) and promote warm-temperature-dependent (e.g. 27 degrees Celsius) PIF4 and MED14 stabilization and accumulation, being more prominently involved in long days (LD) and continuous red light (Rc) than in short days (SD), thus modulating warm temperature elicitation of MED14-dependent thermomorphogenesis (e.g. hypocotyl elongation). In Arabidopsis thaliana (Mouse-ear cress), this protein is Protein PLASTID TRANSCRIPTIONALLY ACTIVE 12, chloroplastic.